The following is a 196-amino-acid chain: Peptidyl-tRNA hydrolase (196 aa).

Y17 is a binding site for tRNA. H22 serves as the catalytic Proton acceptor. Residues F68, N70, and N116 each contribute to the tRNA site.

Belongs to the PTH family. Monomer.

The protein resides in the cytoplasm. The catalysed reaction is an N-acyl-L-alpha-aminoacyl-tRNA + H2O = an N-acyl-L-amino acid + a tRNA + H(+). In terms of biological role, hydrolyzes ribosome-free peptidyl-tRNAs (with 1 or more amino acids incorporated), which drop off the ribosome during protein synthesis, or as a result of ribosome stalling. Its function is as follows. Catalyzes the release of premature peptidyl moieties from peptidyl-tRNA molecules trapped in stalled 50S ribosomal subunits, and thus maintains levels of free tRNAs and 50S ribosomes. The polypeptide is Peptidyl-tRNA hydrolase (Photorhabdus laumondii subsp. laumondii (strain DSM 15139 / CIP 105565 / TT01) (Photorhabdus luminescens subsp. laumondii)).